A 1462-amino-acid chain; its full sequence is Tyrosine-protein phosphatase 69D (1462 aa).

The N-terminal stretch at 1–28 is a signal peptide; sequence MALLYRRMSMLLNIILAYIFLCAICVQG. Ig-like C2-type domains lie at 29 to 125 and 131 to 230; these read SVKQ…TEFQ and PSKV…KEIT. Over 29–805 the chain is Extracellular; it reads SVKQEWAEIG…MDYYLSIGVK (777 aa). N-linked (GlcNAc...) asparagine glycosylation is found at N40, N58, N64, N85, N109, N119, N162, N191, N196, N209, N255, N288, N302, N429, N442, N451, N516, N613, N701, and N755. An intrachain disulfide couples C45 to C112. A disulfide bridge links C154 with C214. Fibronectin type-III domains follow at residues 237–332, 334–435, and 439–547; these read PQVS…TLSY, PIFI…TMDG, and KPTN…TPDA. Residues 806 to 823 traverse the membrane as a helical segment; it reads AGAVLLGVILVFIVLWVF. The Cytoplasmic segment spans residues 824 to 1462; that stretch reads HHKKTKNELQ…LHHIAESTLD (639 aa). 2 Tyrosine-protein phosphatase domains span residues 893-1156 and 1187-1450; these read FLRE…LLDT and LEVE…IINY. Residues C1097 and C1391 each act as phosphocysteine intermediate in the active site.

Belongs to the protein-tyrosine phosphatase family. Receptor class subfamily.

It localises to the membrane. The enzyme catalyses O-phospho-L-tyrosyl-[protein] + H2O = L-tyrosyl-[protein] + phosphate. Its function is as follows. Possible cell adhesion receptor. This chain is Tyrosine-protein phosphatase 69D (Ptp69D), found in Drosophila melanogaster (Fruit fly).